We begin with the raw amino-acid sequence, 204 residues long: Large ribosomal subunit protein uL4 (204 aa).

The interval 53–73 (AFVSGGGKKPWRQKGRGGARA) is disordered.

This sequence belongs to the universal ribosomal protein uL4 family. Part of the 50S ribosomal subunit.

One of the primary rRNA binding proteins, this protein initially binds near the 5'-end of the 23S rRNA. It is important during the early stages of 50S assembly. It makes multiple contacts with different domains of the 23S rRNA in the assembled 50S subunit and ribosome. Its function is as follows. Forms part of the polypeptide exit tunnel. The sequence is that of Large ribosomal subunit protein uL4 from Campylobacter concisus (strain 13826).